The sequence spans 89 residues: Small ribosomal subunit protein uS15 (89 aa).

The protein belongs to the universal ribosomal protein uS15 family. As to quaternary structure, part of the 30S ribosomal subunit. Forms a bridge to the 50S subunit in the 70S ribosome, contacting the 23S rRNA.

One of the primary rRNA binding proteins, it binds directly to 16S rRNA where it helps nucleate assembly of the platform of the 30S subunit by binding and bridging several RNA helices of the 16S rRNA. Functionally, forms an intersubunit bridge (bridge B4) with the 23S rRNA of the 50S subunit in the ribosome. The polypeptide is Small ribosomal subunit protein uS15 (Anaeromyxobacter dehalogenans (strain 2CP-1 / ATCC BAA-258)).